Reading from the N-terminus, the 119-residue chain is Large ribosomal subunit protein uL18 (119 aa).

Belongs to the universal ribosomal protein uL18 family. Part of the 50S ribosomal subunit; part of the 5S rRNA/L5/L18/L25 subcomplex. Contacts the 5S and 23S rRNAs.

This is one of the proteins that bind and probably mediate the attachment of the 5S RNA into the large ribosomal subunit, where it forms part of the central protuberance. The protein is Large ribosomal subunit protein uL18 of Paracoccus denitrificans (strain Pd 1222).